A 525-amino-acid polypeptide reads, in one-letter code: Serine/threonine-protein kinase YPK3 (525 aa).

2 positions are modified to phosphoserine: Ser-90 and Ser-105. Thr-107 is modified (phosphothreonine). The Protein kinase domain occupies 128 to 424 (FKPVRVLGQG…KTGANNKPTK (297 aa)). Residues 134–142 (LGQGAYGKV) and Lys-157 contribute to the ATP site. The tract at residues 170-193 (ATDSKREDEDKNDGNNNDNDDGLS) is disordered. Residues 172–182 (DSKREDEDKND) are compositionally biased toward basic and acidic residues. Catalysis depends on Asp-277, which acts as the Proton acceptor. Ser-321 is modified (phosphoserine; by PKH1 or PKH2). Residues 445 to 524 (RKIDWKLLES…KASGSYLEKY (80 aa)) enclose the AGC-kinase C-terminal domain. Residue Thr-490 is modified to Phosphothreonine; by TORC1. Position 513 is a phosphoserine; by TORC1 (Ser-513).

It belongs to the protein kinase superfamily. AGC Ser/Thr protein kinase family. S6 kinase subfamily. Phosphorylated by PKA in a TORC1-dependent manner. Phosphorylation at PKA consensus sites RRxS/T decreases upon rapamycin treatment.

It localises to the cytoplasm. It carries out the reaction L-seryl-[protein] + ATP = O-phospho-L-seryl-[protein] + ADP + H(+). It catalyses the reaction L-threonyl-[protein] + ATP = O-phospho-L-threonyl-[protein] + ADP + H(+). In terms of biological role, AGC kinase which plays a role in TOR complex 1 (TORC1) signaling pathway which mediates temporal control of cell growth in response to nutrients. Required for phosphorylation of ribosomal protein S6 (RPS6A/RPS6B) at 'Ser-232' and 'Ser-233'. The protein is Serine/threonine-protein kinase YPK3 of Saccharomyces cerevisiae (strain ATCC 204508 / S288c) (Baker's yeast).